The chain runs to 163 residues: MLRTVFNKPSVLKSGVNSITKQCRSLHANAYLLNKGNSNGAEGQDDDVTVRIRIPPIKRTGESLDKKRARLIYQSRKRGILETDLLLSRFAAKYLKEMTPEQLEEYDQLLNELDWDIYYWATENYSITPLPDRWKNSNILKQLQEFSKNKDREILSMPDLSKY.

This sequence belongs to the SDHAF2 family. In terms of assembly, interacts with the flavoprotein subunit within the SDH catalytic dimer.

Its subcellular location is the mitochondrion matrix. Its function is as follows. Plays an essential role in the assembly of succinate dehydrogenase (SDH), an enzyme complex (also referred to as respiratory complex II) that is a component of both the tricarboxylic acid (TCA) cycle and the mitochondrial electron transport chain, and which couples the oxidation of succinate to fumarate with the reduction of ubiquinone (coenzyme Q) to ubiquinol. Required for flavinylation (covalent attachment of FAD) of the flavoprotein subunit of the SDH catalytic dimer. This chain is Succinate dehydrogenase assembly factor 2, mitochondrial, found in Kluyveromyces lactis (strain ATCC 8585 / CBS 2359 / DSM 70799 / NBRC 1267 / NRRL Y-1140 / WM37) (Yeast).